The primary structure comprises 119 residues: Large ribosomal subunit protein bL17 (119 aa).

The protein belongs to the bacterial ribosomal protein bL17 family. As to quaternary structure, part of the 50S ribosomal subunit. Contacts protein L32.

The protein is Large ribosomal subunit protein bL17 of Mesoplasma florum (strain ATCC 33453 / NBRC 100688 / NCTC 11704 / L1) (Acholeplasma florum).